A 46-amino-acid chain; its full sequence is Small, acid-soluble spore protein J (46 aa).

The segment at 24-46 (EDAGSALKDDPLQEAVQKKKNNR) is disordered.

It localises to the spore core. This chain is Small, acid-soluble spore protein J (sspJ), found in Bacillus subtilis (strain 168).